The chain runs to 701 residues: Polyribonucleotide nucleotidyltransferase (701 aa).

Mg(2+) is bound by residues aspartate 487 and aspartate 493. A KH domain is found at 554 to 613 (PTMLQMKIDSDKIRDVIGKGGATIRAICEETKASIDIEDDGSVKIYGETKEAAEAAKQRV). The S1 motif domain occupies 623-691 (GKIYVGKVER…NRGRIKLSIK (69 aa)).

The protein belongs to the polyribonucleotide nucleotidyltransferase family. In terms of assembly, component of the RNA degradosome, which is a multiprotein complex involved in RNA processing and mRNA degradation. Mg(2+) serves as cofactor.

It localises to the cytoplasm. It carries out the reaction RNA(n+1) + phosphate = RNA(n) + a ribonucleoside 5'-diphosphate. Involved in mRNA degradation. Catalyzes the phosphorolysis of single-stranded polyribonucleotides processively in the 3'- to 5'-direction. This chain is Polyribonucleotide nucleotidyltransferase, found in Pseudomonas paraeruginosa (strain DSM 24068 / PA7) (Pseudomonas aeruginosa (strain PA7)).